A 301-amino-acid polypeptide reads, in one-letter code: HTH-type transcriptional regulator EstR (301 aa).

Residues 5-62 (PSLRQLSYLVTLSETLHFTEAARRSFVTQSTLSGGIMELERLLGGVLVERDRQNVRLT) enclose the HTH lysR-type domain. Positions 22–41 (FTEAARRSFVTQSTLSGGIM) form a DNA-binding region, H-T-H motif.

It belongs to the LysR transcriptional regulatory family.

Transcriptional regulator of the esterase operon. This chain is HTH-type transcriptional regulator EstR (estR), found in Acinetobacter baylyi (strain ATCC 33305 / BD413 / ADP1).